A 504-amino-acid chain; its full sequence is Probable GTP-binding protein OBGC2 (504 aa).

Over residues 24–39 (AHRDARPALRLPELHA) the composition is skewed to basic and acidic residues. Disordered regions lie at residues 24–46 (AHRD…RRNN) and 93–122 (VLAM…GVKK). The region spanning 73-276 (HKYFDHAVVT…VSLELILRVV (204 aa)) is the Obg domain. The span at 107 to 122 (SPRRRSDKGKRSGVKK) shows a compositional bias: basic residues. An OBG-type G domain is found at 277-494 (ADVGLVGLPN…MLKEIRAALR (218 aa)). GTP contacts are provided by residues 283-290 (GLPNAGKS) and 337-341 (DLPGL). Residues 436–452 (SEDSLNGNTGEHNTSSE) are compositionally biased toward polar residues. Residues 436-463 (SEDSLNGNTGEHNTSSETKVEGGEKELR) form a disordered region. Residues 453–463 (TKVEGGEKELR) show a composition bias toward basic and acidic residues.

It belongs to the TRAFAC class OBG-HflX-like GTPase superfamily. OBG GTPase family.

May bind GTP and have GTPase activity. This chain is Probable GTP-binding protein OBGC2, found in Oryza sativa subsp. japonica (Rice).